The sequence spans 216 residues: Probable nicotinate-nucleotide adenylyltransferase (216 aa).

This sequence belongs to the NadD family.

It catalyses the reaction nicotinate beta-D-ribonucleotide + ATP + H(+) = deamido-NAD(+) + diphosphate. It participates in cofactor biosynthesis; NAD(+) biosynthesis; deamido-NAD(+) from nicotinate D-ribonucleotide: step 1/1. Its function is as follows. Catalyzes the reversible adenylation of nicotinate mononucleotide (NaMN) to nicotinic acid adenine dinucleotide (NaAD). In Maridesulfovibrio salexigens (strain ATCC 14822 / DSM 2638 / NCIMB 8403 / VKM B-1763) (Desulfovibrio salexigens), this protein is Probable nicotinate-nucleotide adenylyltransferase.